We begin with the raw amino-acid sequence, 310 residues long: Apolipoprotein E (310 aa).

Residues 1–18 (MKVLWAALVVTLLAGCQA) form the signal peptide. Repeat copies occupy residues 77 to 98 (ALMEETMKEVKTYKAQLEQQLG), 99 to 120 (PTAQETQARVSKELQAAQARLG), 121 to 142 (ADMEDVRNRLVQYRSELQAMMG), and 143 to 164 (QSTEELRGRLNSHLRKLRKRLL). An 8 X 22 AA approximate tandem repeats region spans residues 77–248 (ALMEETMKEV…RLDEVREQVQ (172 aa)). Position 140 is a methionine sulfoxide (M140). The residue at position 144 (S144) is a Phosphoserine. Residues 155–165 (HLRKLRKRLLR) are LDL and other lipoprotein receptors binding. 159–162 (LRKR) contacts heparin. Positions 165–186 (RDAEDLQKRLAVYQAGIREGAE) form a repeat. Tandem repeats lie at residues 187-204 (RSVNTLRERLRPLVEQAA), 205-226 (TVRSLISKPLQERAEAWGQRLR), and 227-248 (GRLEKVGTQAGDRLDEVREQVQ). Residues 203-283 (AATVRSLISK…SWFEPLVQDM (81 aa)) form a lipid-binding and lipoprotein association region. 222–229 (GQRLRGRL) contacts heparin. Residues 259–310 (NQMRLQAEAFHARLKSWFEPLVQDMQQKWAELVEKVQLAVGTSPTSESSEKQ) are homooligomerization. Residues 271–283 (RLKSWFEPLVQDM) form a specificity for association with VLDL region.

This sequence belongs to the apolipoprotein A1/A4/E family. In terms of assembly, homotetramer. May interact with ABCA1; functionally associated with ABCA1 in the biogenesis of HDLs. May interact with APP/A4 amyloid-beta peptide; the interaction is extremely stable in vitro but its physiological significance is unclear. May interact with MAPT. May interact with MAP2. In the cerebrospinal fluid, interacts with secreted SORL1. Interacts with PMEL; this allows the loading of PMEL luminal fragment on ILVs to induce fibril nucleation. Post-translationally, APOE exists as multiple glycosylated and sialylated glycoforms within cells and in plasma. The extent of glycosylation and sialylation are tissue and context specific. In terms of processing, glycated in plasma VLDL. Phosphorylated by FAM20C in the extracellular medium.

The protein resides in the secreted. It is found in the extracellular space. The protein localises to the extracellular matrix. It localises to the extracellular vesicle. Its subcellular location is the endosome. The protein resides in the multivesicular body. APOE is an apolipoprotein, a protein associating with lipid particles, that mainly functions in lipoprotein-mediated lipid transport between organs via the plasma and interstitial fluids. APOE is a core component of plasma lipoproteins and is involved in their production, conversion and clearance. Apolipoproteins are amphipathic molecules that interact both with lipids of the lipoprotein particle core and the aqueous environment of the plasma. As such, APOE associates with chylomicrons, chylomicron remnants, very low density lipoproteins (VLDL) and intermediate density lipoproteins (IDL) but shows a preferential binding to high-density lipoproteins (HDL). It also binds a wide range of cellular receptors including the LDL receptor/LDLR, the LDL receptor-related proteins LRP1, LRP2 and LRP8 and the very low-density lipoprotein receptor/VLDLR that mediate the cellular uptake of the APOE-containing lipoprotein particles. Finally, APOE also has a heparin-binding activity and binds heparan-sulfate proteoglycans on the surface of cells, a property that supports the capture and the receptor-mediated uptake of APOE-containing lipoproteins by cells. A main function of APOE is to mediate lipoprotein clearance through the uptake of chylomicrons, VLDLs, and HDLs by hepatocytes. APOE is also involved in the biosynthesis by the liver of VLDLs as well as their uptake by peripheral tissues ensuring the delivery of triglycerides and energy storage in muscle, heart and adipose tissues. By participating in the lipoprotein-mediated distribution of lipids among tissues, APOE plays a critical role in plasma and tissues lipid homeostasis. APOE is also involved in two steps of reverse cholesterol transport, the HDLs-mediated transport of cholesterol from peripheral tissues to the liver, and thereby plays an important role in cholesterol homeostasis. First, it is functionally associated with ABCA1 in the biogenesis of HDLs in tissues. Second, it is enriched in circulating HDLs and mediates their uptake by hepatocytes. APOE also plays an important role in lipid transport in the central nervous system, regulating neuron survival and sprouting. In Tapirus terrestris (Lowland tapir), this protein is Apolipoprotein E (APOE).